Reading from the N-terminus, the 212-residue chain is Uridine kinase (212 aa).

ATP is bound at residue 13–20; sequence GGSGSGKT.

The protein belongs to the uridine kinase family.

Its subcellular location is the cytoplasm. It carries out the reaction uridine + ATP = UMP + ADP + H(+). The enzyme catalyses cytidine + ATP = CMP + ADP + H(+). It participates in pyrimidine metabolism; CTP biosynthesis via salvage pathway; CTP from cytidine: step 1/3. Its pathway is pyrimidine metabolism; UMP biosynthesis via salvage pathway; UMP from uridine: step 1/1. The protein is Uridine kinase of Bacillus anthracis (strain A0248).